Here is a 288-residue protein sequence, read N- to C-terminus: Chitinase 5 (288 aa).

The N-terminal stretch at 1–29 is a signal peptide; it reads MANSPTPTMLAFLALGLALLLSATGQASA. The Chitin-binding type-1 domain maps to 30 to 64; it reads QNCGCQSNMCCSKWGYCGTGKDYCGDGCRSGPCYG. Cystine bridges form between Cys-32-Cys-40, Cys-34-Cys-46, Cys-39-Cys-53, Cys-57-Cys-62, Cys-107-Cys-156, Cys-169-Cys-178, and Cys-256-Cys-288. The active-site Proton donor is Glu-151.

It belongs to the glycosyl hydrolase 19 family. Chitinase class IV subfamily. Expressed in sheaths and meristems and at lower levels in roots and leaves.

The catalysed reaction is Random endo-hydrolysis of N-acetyl-beta-D-glucosaminide (1-&gt;4)-beta-linkages in chitin and chitodextrins.. In terms of biological role, may function in reproductive organs during embryogenesis and seed maturation. The protein is Chitinase 5 (Cht5) of Oryza sativa subsp. japonica (Rice).